A 162-amino-acid polypeptide reads, in one-letter code: NADH-quinone oxidoreductase subunit I (162 aa).

2 4Fe-4S ferredoxin-type domains span residues 52-82 (LRRY…IEAG) and 93-122 (TRYD…EGPN). Residues cysteine 62, cysteine 65, cysteine 68, cysteine 72, cysteine 102, cysteine 105, cysteine 108, and cysteine 112 each coordinate [4Fe-4S] cluster.

The protein belongs to the complex I 23 kDa subunit family. In terms of assembly, NDH-1 is composed of 14 different subunits. Subunits NuoA, H, J, K, L, M, N constitute the membrane sector of the complex. [4Fe-4S] cluster serves as cofactor.

Its subcellular location is the cell inner membrane. The catalysed reaction is a quinone + NADH + 5 H(+)(in) = a quinol + NAD(+) + 4 H(+)(out). In terms of biological role, NDH-1 shuttles electrons from NADH, via FMN and iron-sulfur (Fe-S) centers, to quinones in the respiratory chain. The immediate electron acceptor for the enzyme in this species is believed to be ubiquinone. Couples the redox reaction to proton translocation (for every two electrons transferred, four hydrogen ions are translocated across the cytoplasmic membrane), and thus conserves the redox energy in a proton gradient. The sequence is that of NADH-quinone oxidoreductase subunit I from Methylocella silvestris (strain DSM 15510 / CIP 108128 / LMG 27833 / NCIMB 13906 / BL2).